The primary structure comprises 660 residues: MGTPCQSARGPRTTPLPHCPPPCLPGAPDQQTRRLPPGWGQRTAPTQVGLADAASPDELQDQASGARPGGGNRVGAGRGRPGTPAPSRQSRRTGPAEQADHAHSNPTGGCSDPQRSPRTRQAGYALGEGSAGLGSRGPRPHPAFQVQWSARNPGCPRTWRRRSGAQRGHPPPGAGQRPSGPTGGRPAAPGAPGTPAAPGPGGGAAVPSGATPHPERGSGPADPPAAARLPPERQEPRLPQDLAAAQRCPAGPPPTRSGAAAQRTHRRPPGCPRSARNPGCPRTWRRRSGAQRGHPPPGAGQRPSGPTGGRPAAPGAPGTPAAPGPGGGAAVPSGATPHPERGSGPADPPAAARLPPERQEPRLPQDLAAAQRCPAGPPPTRSGAAAQRTHRRPPGCPRSARNPGCPRTWRRRSGAQRGHPPPGAGQRPSGPTGGRPAAPGAPGTPAAPGPGGGAAVPSGATPHPERGSGPADPPAAARLPPERQEPRLPQDLAAAQRCPAGPPPTRSGAAAQRTHRRPPGCPRSARNPGCPRTWRRRSGAQRGHPPPGAGQRPSGPTGGRPAAPGAPGTPAAPGPGGGAAVPSGATPHPERGSGPADPPAAARLPPERQEPRLPQDLAAAQRCPAGPPPTRSGAAAQRTHRRPPGCPRSARNPGCPRTWR.

The tract at residues M1 to R660 is disordered. Positions R67 to R80 are enriched in gly residues. A compositionally biased stretch (polar residues) spans S104–S116. 4 repeat units span residues S149–R273, S274–R398, S399–R523, and S524–R648. The 4 X 125 AA tandem repeats stretch occupies residues S149–R648. Composition is skewed to low complexity over residues R177–A196, R302–A321, R427–A446, and R552–A571.

This is an uncharacterized protein from Homo sapiens (Human).